The sequence spans 296 residues: Bidirectional sugar transporter SWEET13 (296 aa).

Residues Met-1–Pro-9 are Extracellular-facing. Residues Trp-10 to Ile-30 form a helical membrane-spanning segment. Residues Ala-13–Lys-98 enclose the MtN3/slv 1 domain. Residues Pro-31 to Phe-45 are Cytoplasmic-facing. A helical transmembrane segment spans residues Gln-46 to Ile-66. Residues Lys-67–Ala-71 are Extracellular-facing. A helical transmembrane segment spans residues Leu-72–Leu-92. Topologically, residues Ala-93–Lys-105 are cytoplasmic. A helical membrane pass occupies residues Ile-106–Ser-126. The Extracellular segment spans residues His-127–Val-133. Residues Ser-134 to Ile-154 form a helical membrane-spanning segment. Residues Ser-134–Ala-217 form the MtN3/slv 2 domain. Residues Lys-155–Pro-167 lie on the Cytoplasmic side of the membrane. The chain crosses the membrane as a helical span at residues Phe-168–Ile-188. The Extracellular portion of the chain corresponds to Lys-189 to Tyr-192. A helical transmembrane segment spans residues Val-193–Phe-213. The Cytoplasmic segment spans residues Tyr-214–Val-296.

The protein belongs to the SWEET sugar transporter family. Forms homooligomers and/or heterooligomers.

It is found in the cell membrane. In terms of biological role, mediates both low-affinity uptake and efflux of sugar across the plasma membrane. Functionally, confers blight susceptibility. Confers TAL effector-mediated susceptibility to Xanthomonas oryzae pv. oryzae. In Oryza sativa subsp. japonica (Rice), this protein is Bidirectional sugar transporter SWEET13 (SWEET13).